We begin with the raw amino-acid sequence, 285 residues long: Glutamate racemase (285 aa).

Substrate contacts are provided by residues 28–29 (DS) and 60–61 (YG). Residue Cys-92 is the Proton donor/acceptor of the active site. Position 93 to 94 (93 to 94 (NT)) interacts with substrate. Residue Cys-204 is the Proton donor/acceptor of the active site. Residue 205 to 206 (TH) coordinates substrate.

This sequence belongs to the aspartate/glutamate racemases family.

The catalysed reaction is L-glutamate = D-glutamate. It functions in the pathway cell wall biogenesis; peptidoglycan biosynthesis. Functionally, provides the (R)-glutamate required for cell wall biosynthesis. The chain is Glutamate racemase from Escherichia fergusonii (strain ATCC 35469 / DSM 13698 / CCUG 18766 / IAM 14443 / JCM 21226 / LMG 7866 / NBRC 102419 / NCTC 12128 / CDC 0568-73).